The sequence spans 671 residues: K(+)-insensitive pyrophosphate-energized proton pump (671 aa).

A run of 5 helical transmembrane segments spans residues 3-23 (SLIFIAPLAGVISLVFAAFFA), 57-77 (TIAVVSIILSFLILFLLDDGL), 79-99 (IAIGFLAGAISSAAAGYIGMS), 128-148 (AVTGLAVVGLALLGTSSFYIL), and 156-176 (VGFGFGASLISLFARVGGGIF). Lysine 178 is a substrate binding site. Mg(2+) is bound by residues aspartate 181, aspartate 185, asparagine 208, and aspartate 211. Transmembrane regions (helical) follow at residues 223-243 (LFETYVVTSLAAMLLGSLIIG), 249-269 (ILYPLVLGSVAIFASIISVFF), 285-305 (GVGGSAIISLIAFYFVTNSLM), 310-330 (LFYATVVGIIITVLMVIITEY), 366-386 (LVPTVVIVIGILISYFIVGGA), and 391-411 (IGLYGIAIAAVAMLSTTGMIV). Aspartate 421 contacts Mg(2+). A run of 4 helical transmembrane segments spans residues 452 to 472 (AVTKGYAIGSAALGALALFAD), 490 to 510 (VVLAGLLLGALLPFVFSAVTM), 558 to 578 (MAMPGFLAVLVPLLVGLILGP), and 580 to 600 (ALAGLLIGLIVVGFMLALMMD). 3 residues coordinate Ca(2+): aspartate 607, aspartate 633, and aspartate 637. Residue lysine 640 participates in substrate binding. Residues 646-666 (ALNALIKVVNMVAILFSSLII) form a helical membrane-spanning segment.

It belongs to the H(+)-translocating pyrophosphatase (TC 3.A.10) family. K(+)-insensitive subfamily. Homodimer. The cofactor is Mg(2+).

It localises to the cell membrane. The catalysed reaction is diphosphate + H2O + H(+)(in) = 2 phosphate + 2 H(+)(out). Proton pump that utilizes the energy of pyrophosphate hydrolysis as the driving force for proton movement across the membrane. Generates a proton motive force. The polypeptide is K(+)-insensitive pyrophosphate-energized proton pump (Methanosarcina acetivorans (strain ATCC 35395 / DSM 2834 / JCM 12185 / C2A)).